Here is a 53-residue protein sequence, read N- to C-terminus: Insulin (53 aa).

The propeptide at 1–30 (DVEPLLGFLSPKSGQENEVDDFPYKGQGEL) is c peptide. Cysteine 38 and cysteine 43 are joined by a disulfide.

It belongs to the insulin family. In terms of assembly, heterodimer of a B chain and an A chain linked by two disulfide bonds.

The protein localises to the secreted. Insulin decreases blood glucose concentration. It increases cell permeability to monosaccharides, amino acids and fatty acids. It accelerates glycolysis, the pentose phosphate cycle, and glycogen synthesis in liver. The sequence is that of Insulin (ins) from Anguilla anguilla (European freshwater eel).